Here is a 256-residue protein sequence, read N- to C-terminus: MILELKNISKTYPSGRRALQSISFKIEEGEILAIIGLSGAGKSTMLRCINRLVEPDEGEVIFLGEKINKLKGKKLRQYRSKIGMIFQNYNLVERLNAVENVLHGCLGSIPSYRGALGLYTEEEKEKAFALLQTVGMEEFAFQRCSELSGGQKQRIGIARALMQSPKLLLCDEPIASLDPQSSETVLNYIKEFAVNKNIACLISLHQMEAAKKYADRIIALNNGKIVFDGIPDSLNDEVLHKEIFTNVSIDSGEKSL.

The region spanning 3 to 247 is the ABC transporter domain; the sequence is LELKNISKTY…VLHKEIFTNV (245 aa). 36–43 serves as a coordination point for ATP; sequence GLSGAGKS.

This sequence belongs to the ABC transporter superfamily. Phosphonates importer (TC 3.A.1.9.1) family. As to quaternary structure, the complex is composed of two ATP-binding proteins (PhnC), two transmembrane proteins (PhnE) and a solute-binding protein (PhnD).

The protein resides in the cell inner membrane. It catalyses the reaction phosphonate(out) + ATP + H2O = phosphonate(in) + ADP + phosphate + H(+). Functionally, part of the ABC transporter complex PhnCDE involved in phosphonates import. Responsible for energy coupling to the transport system. This Treponema denticola (strain ATCC 35405 / DSM 14222 / CIP 103919 / JCM 8153 / KCTC 15104) protein is Phosphonates import ATP-binding protein PhnC.